Reading from the N-terminus, the 91-residue chain is Small ribosomal subunit protein bS20 (91 aa).

The disordered stretch occupies residues 1-25 (MANSPSAKKRAKQAEKRRSHNASLR). Positions 7 to 20 (AKKRAKQAEKRRSH) are enriched in basic residues.

The protein belongs to the bacterial ribosomal protein bS20 family.

Binds directly to 16S ribosomal RNA. The chain is Small ribosomal subunit protein bS20 from Azotobacter vinelandii (strain DJ / ATCC BAA-1303).